The chain runs to 502 residues: Lysine--tRNA ligase (502 aa).

The disordered stretch occupies residues 1–22; sequence MSDHEQAQAQSQDENQIMAERR. Mg(2+)-binding residues include Glu-413 and Glu-420.

This sequence belongs to the class-II aminoacyl-tRNA synthetase family. In terms of assembly, homodimer. Requires Mg(2+) as cofactor.

The protein localises to the cytoplasm. It carries out the reaction tRNA(Lys) + L-lysine + ATP = L-lysyl-tRNA(Lys) + AMP + diphosphate. The chain is Lysine--tRNA ligase from Chromobacterium violaceum (strain ATCC 12472 / DSM 30191 / JCM 1249 / CCUG 213 / NBRC 12614 / NCIMB 9131 / NCTC 9757 / MK).